A 350-amino-acid polypeptide reads, in one-letter code: Protein-glutamate methylesterase/protein-glutamine glutaminase 1 (350 aa).

The Response regulatory domain maps to 1–116; it reads MVVDDSAVVR…KGFLHDSAKV (116 aa). D50 is subject to 4-aspartylphosphate. The 191-residue stretch at 160–350 folds into the CheB-type methylesterase domain; it reads LKTTEQLVAI…IPQAILDCSH (191 aa). Catalysis depends on residues S172, H198, and D294.

The protein belongs to the CheB family. In terms of processing, phosphorylated by CheA. Phosphorylation of the N-terminal regulatory domain activates the methylesterase activity.

Its subcellular location is the cytoplasm. The catalysed reaction is [protein]-L-glutamate 5-O-methyl ester + H2O = L-glutamyl-[protein] + methanol + H(+). It carries out the reaction L-glutaminyl-[protein] + H2O = L-glutamyl-[protein] + NH4(+). Functionally, involved in chemotaxis. Part of a chemotaxis signal transduction system that modulates chemotaxis in response to various stimuli. Catalyzes the demethylation of specific methylglutamate residues introduced into the chemoreceptors (methyl-accepting chemotaxis proteins or MCP) by CheR. Also mediates the irreversible deamidation of specific glutamine residues to glutamic acid. This chain is Protein-glutamate methylesterase/protein-glutamine glutaminase 1, found in Photobacterium profundum (strain SS9).